A 414-amino-acid chain; its full sequence is MSQNIRVVITGMGALSPIGNDVKTTWENALKGVNGIDKITRIDTEPYSVHLAGELKNFNIEDHIDKKEARRMDRFTQYAIVAAREAVKDAQLDINENTADRIGVWIGSGIGGMETFEIAHKQLMDKGPRRVSPFFVPMLIPDMATGQVSIDLGAKGPNGATVTACATGTNSIGEAFKIVQRGDADAMITGGTEAPITHMAIAGFSASRALSTNDDIETACRPFQEGRDGFVMGEGAGILVIESLESAQARGANIYAEIVGYGTTGDAYHITAPAPEGEGGSRAMQAAMDDAGIEPKDVQYLNAHGTSTPVGDLNEVKAIKNTFGEAAKHLKVSSTKSMTGHLLGATGGIEAIFSALSIKDSKVAPTIHAVTPDPECDLDIVPNEAQDLDITYAMSNSLGFGGHNAVLVFKKFEA.

The Ketosynthase family 3 (KS3) domain maps to 4-411; the sequence is NIRVVITGMG…GHNAVLVFKK (408 aa). Catalysis depends on for beta-ketoacyl synthase activity residues C165, H304, and H341.

Belongs to the thiolase-like superfamily. Beta-ketoacyl-ACP synthases family.

It catalyses the reaction a fatty acyl-[ACP] + malonyl-[ACP] + H(+) = a 3-oxoacyl-[ACP] + holo-[ACP] + CO2. The enzyme catalyses (9Z)-hexadecenoyl-[ACP] + malonyl-[ACP] + H(+) = 3-oxo-(11Z)-octadecenoyl-[ACP] + holo-[ACP] + CO2. It participates in lipid metabolism; fatty acid biosynthesis. Functionally, involved in the type II fatty acid elongation cycle. Catalyzes the elongation of a wide range of acyl-ACP by the addition of two carbons from malonyl-ACP to an acyl acceptor. Can efficiently catalyze the conversion of palmitoleoyl-ACP (cis-hexadec-9-enoyl-ACP) to cis-vaccenoyl-ACP (cis-octadec-11-enoyl-ACP), an essential step in the thermal regulation of fatty acid composition. This chain is 3-oxoacyl-[acyl-carrier-protein] synthase 2 (fabF), found in Staphylococcus aureus (strain MRSA252).